We begin with the raw amino-acid sequence, 50 residues long: Sperm protamine P1 (50 aa).

2 disulfide bridges follow: Cys7–Cys15 and Cys39–Cys47.

This sequence belongs to the protamine P1 family. Cross-linked by interchain disulfide bonds around the DNA-helix. Testis.

It localises to the nucleus. The protein resides in the chromosome. In terms of biological role, protamines substitute for histones in the chromatin of sperm during the haploid phase of spermatogenesis. They compact sperm DNA into a highly condensed, stable and inactive complex. This chain is Sperm protamine P1 (PRM1), found in Sus scrofa (Pig).